The sequence spans 289 residues: Geranylgeranyl diphosphate synthase (289 aa).

Isopentenyl diphosphate is bound by residues Arg-43 and His-73. The Mg(2+) site is built by Asp-80 and Asp-86. Arg-91 provides a ligand contact to (2E,6E)-farnesyl diphosphate. Arg-92 is a binding site for isopentenyl diphosphate. (2E,6E)-farnesyl diphosphate is bound by residues Lys-170, Thr-171, and Gln-205.

Belongs to the FPP/GGPP synthase family. It depends on Mg(2+) as a cofactor.

The enzyme catalyses isopentenyl diphosphate + (2E,6E)-farnesyl diphosphate = (2E,6E,10E)-geranylgeranyl diphosphate + diphosphate. The protein operates within isoprenoid biosynthesis; geranylgeranyl diphosphate biosynthesis; geranylgeranyl diphosphate from farnesyl diphosphate and isopentenyl diphosphate: step 1/1. Catalyzes the condensation of farnesyl diphosphate (FPP) and isopentenyl diphosphate (IPP) to yield geranylgeranyl diphosphate (GGPP) needed for biosynthesis of carotenoids and diterpenes. The sequence is that of Geranylgeranyl diphosphate synthase (crtE) from Rhodobacter capsulatus (strain ATCC BAA-309 / NBRC 16581 / SB1003).